We begin with the raw amino-acid sequence, 638 residues long: 1-deoxy-D-xylulose-5-phosphate synthase (638 aa).

Thiamine diphosphate contacts are provided by residues His77 and 118–120; that span reads AHA. Asp149 serves as a coordination point for Mg(2+). Thiamine diphosphate is bound by residues 150–151, Asn178, Tyr287, and Glu369; that span reads GS. Position 178 (Asn178) interacts with Mg(2+).

This sequence belongs to the transketolase family. DXPS subfamily. In terms of assembly, homodimer. Mg(2+) is required as a cofactor. The cofactor is thiamine diphosphate.

The catalysed reaction is D-glyceraldehyde 3-phosphate + pyruvate + H(+) = 1-deoxy-D-xylulose 5-phosphate + CO2. It participates in metabolic intermediate biosynthesis; 1-deoxy-D-xylulose 5-phosphate biosynthesis; 1-deoxy-D-xylulose 5-phosphate from D-glyceraldehyde 3-phosphate and pyruvate: step 1/1. Functionally, catalyzes the acyloin condensation reaction between C atoms 2 and 3 of pyruvate and glyceraldehyde 3-phosphate to yield 1-deoxy-D-xylulose-5-phosphate (DXP). This Phenylobacterium zucineum (strain HLK1) protein is 1-deoxy-D-xylulose-5-phosphate synthase.